The following is a 325-amino-acid chain: GTPase Era (325 aa).

The region spanning 30 to 198 is the Era-type G domain; sequence HCGFVAIVGR…KKHVRDHLPK (169 aa). Positions 38–45 are G1; it reads GRPNVGKS. GTP is bound at residue 38–45; that stretch reads GRPNVGKS. A G2 region spans residues 64-68; the sequence is QTTRH. Positions 85-88 are G3; it reads DTPG. Residues 85–89 and 147–150 each bind GTP; these read DTPGL and NKVD. The segment at 147 to 150 is G4; the sequence is NKVD. The interval 177–179 is G5; sequence ISA. Residues 221–307 form the KH type-2 domain; the sequence is VREKLMRFTG…YLETWVKVKS (87 aa).

Belongs to the TRAFAC class TrmE-Era-EngA-EngB-Septin-like GTPase superfamily. Era GTPase family. In terms of assembly, monomer.

Its subcellular location is the cytoplasm. It localises to the cell inner membrane. In terms of biological role, an essential GTPase that binds both GDP and GTP, with rapid nucleotide exchange. Plays a role in 16S rRNA processing and 30S ribosomal subunit biogenesis and possibly also in cell cycle regulation and energy metabolism. This is GTPase Era from Vibrio cholerae serotype O1 (strain ATCC 39315 / El Tor Inaba N16961).